A 329-amino-acid polypeptide reads, in one-letter code: Biotin synthase (329 aa).

Residues 38–262 form the Radical SAM core domain; it reads NTIQVSTLLS…IMPHSYIRLS (225 aa). Cys-53, Cys-57, and Cys-60 together coordinate [4Fe-4S] cluster. 4 residues coordinate [2Fe-2S] cluster: Cys-97, Cys-128, Cys-188, and Arg-260.

This sequence belongs to the radical SAM superfamily. Biotin synthase family. Homodimer. The cofactor is [4Fe-4S] cluster. [2Fe-2S] cluster serves as cofactor.

The enzyme catalyses (4R,5S)-dethiobiotin + (sulfur carrier)-SH + 2 reduced [2Fe-2S]-[ferredoxin] + 2 S-adenosyl-L-methionine = (sulfur carrier)-H + biotin + 2 5'-deoxyadenosine + 2 L-methionine + 2 oxidized [2Fe-2S]-[ferredoxin]. Its pathway is cofactor biosynthesis; biotin biosynthesis; biotin from 7,8-diaminononanoate: step 2/2. Functionally, catalyzes the conversion of dethiobiotin (DTB) to biotin by the insertion of a sulfur atom into dethiobiotin via a radical-based mechanism. The chain is Biotin synthase from Acinetobacter baumannii (strain ACICU).